The primary structure comprises 400 residues: MAIHKIRAFFNLEASGGIVLALAAIAAMIIANTSLNTWYESFIHAPVAIQIGSFSIAKDAHHWINDGLMAVFFFLVGLELKREVLIGELSNVKQIILPAGAALGGMIMPAIVYLFFNYNEPEFWRGWAIPAATDIAFALGILSLLGNRVPNSLKVFLVSIAIFDDIGAIIIIALFYTNDLSLGSLAIAGLCLPFLYLLNRRNVTSITPYLLIGVIMWVAVLKSGIHATLAGVVLALFIPLFDRTDPEHSPLEELEHDLQNTVSYGILPLFAFANAGISLKGAGFGELFHSVPLGIAAGLFIGKQVGVMLMCWLIFKLGISTMPKGMNFKQIYGAALLCGVGFTMSLFIGGLAFAGETPLFDERLGIIMGSIVSGIAGYMMLKATLKDEVNVTSVDLTRHS.

The next 11 membrane-spanning stretches (helical) occupy residues 10-30, 60-80, 95-115, 126-146, 155-175, 178-198, 218-238, 265-285, 295-315, 334-354, and 364-384; these read FNLE…AMII, AHHW…GLEL, IILP…VYLF, GWAI…SLLG, VFLV…IALF, NDLS…LYLL, VAVL…ALFI, GILP…AGFG, IAAG…WLIF, AALL…LAFA, and LGII…LKAT.

It belongs to the NhaA Na(+)/H(+) (TC 2.A.33) antiporter family.

It localises to the cell inner membrane. The enzyme catalyses Na(+)(in) + 2 H(+)(out) = Na(+)(out) + 2 H(+)(in). In terms of biological role, na(+)/H(+) antiporter that extrudes sodium in exchange for external protons. This Psychrobacter cryohalolentis (strain ATCC BAA-1226 / DSM 17306 / VKM B-2378 / K5) protein is Na(+)/H(+) antiporter NhaA.